We begin with the raw amino-acid sequence, 754 residues long: Lysophospholipase 3 (754 aa).

Residues 1–19 form the signal peptide; the sequence is MKVNLKLIIGSILISQAQA. 2 stretches are compositionally biased toward low complexity: residues 25–40 and 50–88; these read SSGSSSSSDSSPSETG and LFGSGSSLTQSSSAQASSTKSTSDSASSTDSSLFSSSNS. The tract at residues 25–88 is disordered; the sequence is SSGSSSSSDS…DSSLFSSSNS (64 aa). Residues Asn-112, Asn-156, Asn-174, Asn-317, Asn-325, Asn-354, Asn-391, Asn-423, Asn-470, Asn-510, Asn-515, Asn-560, Asn-577, Asn-597, Asn-625, and Asn-631 are each glycosylated (N-linked (GlcNAc...) asparagine). In terms of domain architecture, PLA2c spans 114-670; the sequence is TCPSKKTFIR…QEYCWTGGFK (557 aa). Positions 687 to 721 are enriched in low complexity; the sequence is KTHTSGGTSSTTQQTSTTTGSSANGGSSSTGSSSS. The tract at residues 687-727 is disordered; it reads KTHTSGGTSSTTQQTSTTTGSSANGGSSSTGSSSSSKKKNG.

Belongs to the lysophospholipase family.

The protein localises to the secreted. It catalyses the reaction a 1-acyl-sn-glycero-3-phosphocholine + H2O = sn-glycerol 3-phosphocholine + a fatty acid + H(+). In terms of biological role, catalyzes the release of fatty acids from lysophospholipids. Phospholipase B may well contribute to pathogenicity by abetting the fungus in damaging and traversing host cell membranes, processes which likely increase the rapidity of disseminated infection. This Candida albicans (Yeast) protein is Lysophospholipase 3 (PLB3).